Reading from the N-terminus, the 812-residue chain is Xaa-Pro dipeptidyl-peptidase (812 aa).

Active-site charge relay system residues include S372, D492, and H523.

This sequence belongs to the peptidase S15 family. In terms of assembly, homodimer.

Its subcellular location is the cytoplasm. The enzyme catalyses Hydrolyzes Xaa-Pro-|- bonds to release unblocked, N-terminal dipeptides from substrates including Ala-Pro-|-p-nitroanilide and (sequentially) Tyr-Pro-|-Phe-Pro-|-Gly-Pro-|-Ile.. Removes N-terminal dipeptides sequentially from polypeptides having unsubstituted N-termini provided that the penultimate residue is proline. This chain is Xaa-Pro dipeptidyl-peptidase, found in Pediococcus pentosaceus (strain ATCC 25745 / CCUG 21536 / LMG 10740 / 183-1w).